The sequence spans 497 residues: Delayed-rectifier potassium channel regulatory subunit KCNS1 (497 aa).

At 1-186 (MVSEFPGPGS…LTMENPGYSL (186 aa)) the chain is on the cytoplasmic side. Residues 187–208 (PSKLFSCVSIGVVLASIAAMCI) form a helical membrane-spanning segment. Over 209–239 (HSLPEYQAREAAAAVAAVAAGRSAEDVRDDP) the chain is Extracellular. The helical transmembrane segment at 240-262 (VLRRLEYFCIAWFSFEVSSRLLL) threads the bilayer. Topologically, residues 263 to 273 (APSTRNFFCHP) are cytoplasmic. A helical membrane pass occupies residues 274 to 291 (LNLIDIVSVLPFYLTLLA). Residues 292–309 (GAALGDRRGASGEELGDL) are Extracellular-facing. A helical; Voltage-sensor membrane pass occupies residues 310–330 (GKVVQVFRLMRIFRVLKLARH). The Cytoplasmic portion of the chain corresponds to 331-345 (STGLRSLGATLKHSY). The chain crosses the membrane as a helical span at residues 346–367 (REVGILLLYLAVGVSVFSGVAY). The Extracellular portion of the chain corresponds to 368–379 (TAEEKNVGFDTI). Residues 380-391 (PACWWWGTVSMT) constitute an intramembrane region (helical). The short motif at 392–397 (TVGYGD) is the Selectivity filter element. Residues 392–399 (TVGYGDVV) lie within the membrane without spanning it. Over 400 to 406 (PETVAGK) the chain is Extracellular. The chain crosses the membrane as a helical span at residues 407–435 (LAASGCILGGILVVALPITIIFNKFSHFY). Residues 436 to 497 (RRQKALEAAV…PSEPAKSHSY (62 aa)) lie on the Cytoplasmic side of the membrane. A disordered region spans residues 464 to 497 (SDVSLETSRETSQEGRSTDLETQAPSEPAKSHSY). Residues 470 to 482 (TSRETSQEGRSTD) are compositionally biased toward basic and acidic residues.

Belongs to the potassium channel family. S (TC 1.A.1.2) subfamily. Kv9.1/KCNS1 sub-subfamily. In terms of assembly, heterotetramer with KCNB1. Heterotetramer with KCNB2. Does not form homomultimers. As to expression, highly expressed in brain, but not in the other tissues tested.

The protein localises to the cell membrane. Its function is as follows. Potassium channel regulatory subunit that modulate the delayed rectifier voltage-gated potassium channel activity of KCNB1 and KCNB2 by altering their kinetics, expression levels, and shifting the half-inactivation potential to more polarized values. While it does not form functional channels on its own, it can form functional heterotetrameric channels with KCNB1 and KCNB2. Each regulatory subunit has unique regulatory properties that can lead to extensive inhibition, significant changes in kinetics, and/or substantial shifts in the voltage dependencies of the inactivation process. In Rattus norvegicus (Rat), this protein is Delayed-rectifier potassium channel regulatory subunit KCNS1.